The primary structure comprises 464 residues: Cysteine--tRNA ligase (464 aa).

Cys29 contributes to the Zn(2+) binding site. The short motif at 31–41 (ATVQGDPHIGH) is the 'HIGH' region element. 3 residues coordinate Zn(2+): Cys207, His232, and Glu236. The 'KMSKS' region signature appears at 263–267 (KMSKS). Residue Lys266 coordinates ATP.

Belongs to the class-I aminoacyl-tRNA synthetase family. Monomer. Zn(2+) serves as cofactor.

The protein localises to the cytoplasm. The enzyme catalyses tRNA(Cys) + L-cysteine + ATP = L-cysteinyl-tRNA(Cys) + AMP + diphosphate. The polypeptide is Cysteine--tRNA ligase (Rhodococcus opacus (strain B4)).